Reading from the N-terminus, the 162-residue chain is Anaerobic nitrite reductase GLB1 (162 aa).

The region spanning V9–K159 is the Globin domain. Positions E42–S46 match the Homodimerization motif. Heme b is bound by residues K66, H70, R100, T104, and H105. The Homodimerization motif lies at D112–E124.

Belongs to the plant globin family. Homodimer. Requires heme b as cofactor. Seeds and roots.

Its subcellular location is the cytoplasm. The protein localises to the nucleus. The enzyme catalyses Fe(III)-heme b-[protein] + nitric oxide + H2O = Fe(II)-heme b-[protein] + nitrite + 2 H(+). Its function is as follows. Phytoglobin that reduces nitrite to nitric oxide (NO) under anoxic conditions (e.g. during flooding or in waterlogged soil). May not function as an oxygen storage or transport protein. Has an unusually high affinity for O(2) through an hexacoordinate heme iron because of a very low dissociation constant. This is Anaerobic nitrite reductase GLB1 from Hordeum vulgare (Barley).